The chain runs to 276 residues: Large ribosomal subunit protein uL2 (276 aa).

Disordered stretches follow at residues 1-20 (MGIKKYNPTTNGRRNMTTND) and 219-276 (TVRG…RRKK). Residues 7–20 (NPTTNGRRNMTTND) are compositionally biased toward polar residues.

This sequence belongs to the universal ribosomal protein uL2 family. Part of the 50S ribosomal subunit. Forms a bridge to the 30S subunit in the 70S ribosome.

In terms of biological role, one of the primary rRNA binding proteins. Required for association of the 30S and 50S subunits to form the 70S ribosome, for tRNA binding and peptide bond formation. It has been suggested to have peptidyltransferase activity; this is somewhat controversial. Makes several contacts with the 16S rRNA in the 70S ribosome. This Bacillus cereus (strain Q1) protein is Large ribosomal subunit protein uL2.